The primary structure comprises 852 residues: MYALLVFVERYSECKPVSESSSSTSLSAMGLPHGNKTSDVNSAAGSVPTTLAIASTSTILTTSQNVSGSTRLSLTQSQDFPTSTPVNCKKATESDTTPVVFVRRGPMDRNRGAGKDERNDLSVIKERVLNAVSDQSLSGYRSVTNKTGNSPKSMPNDLVTLTDVPDEYRTHLLWEYYKVDGDKVPRAEIAAMPLLSQESMLLDELLHCLTGIRESLLVPQKPIISAVGLAKYDTDFDIHTHLDRSLTHQVREILPLASYFMGVQKIIAATDGLGQVMNSLNEALQELTHDFYLIIVQAEQELRHNRLTLQKLLYYLQPTMWVMHEVWSSLVIIQLSDSRDAEVLTYLHERIKRLEGNKDAQQLIIGLVRKAAKPYMRMLQMWIQKGVIVDRHREFLVVDNEVIHRDELPEHYSDDYWERRYTLRDEQIPSFLAKYSDKILRTGKYLNVIRQCGKRVMPTQEMNLEFDPTSERHVSVINDAYYFAARMLLDVLLTENDLMGHLQSVKRYLLLNQGDFTMQFMDACEDELTKNVDHVLPMTLENLLGLTLRISSARNDPYKDDLHCELLPYDLVTQMSKIMKKEENWQAQPRLDLSGLECFAFTYEVKWPCSLVLNHISISKYQMLFRQLFYCKHVERQLCKIWKENSIARQFEPQAASLYRAAFTLRQRMMNAIQNLEYYMMIEIIEPNWHIFIEKMKTVENVDNVLRLHQDFLDSCLKNCMLTESSHLNRSIFKLCKICLKYCEFIQITQRYFQDAELRSMVRDSADSSESEQESLHCPQIETPLDPTDTFSERVRRFDLEFTQLLISFLKQINSMAKKNTADCFMNLVHRINFNAFYTDQMDKMCVEDAIG.

Ser73 bears the Phosphoserine mark.

Belongs to the TUBGCP family. Gamma-tubulin small complex (Gamma TuSC) is a heterotetrameric complex which contains two molecules of gamma-tubulin, and one molecule each of Dgrip84 and Dgrip91. The gamma-tubulin in this complex binds preferentially to GDP over GTP.

Its subcellular location is the cytoplasm. It localises to the cytoskeleton. It is found in the microtubule organizing center. The protein localises to the centrosome. The protein resides in the perinuclear region. This Drosophila melanogaster (Fruit fly) protein is Gamma-tubulin complex component 2 homolog (Grip84).